Here is a 474-residue protein sequence, read N- to C-terminus: Transcription factor fscB (474 aa).

Disordered regions lie at residues 114–153 (VDEL…SYWT) and 207–242 (GKEV…NPAP). Low complexity predominate over residues 120–131 (SSDTRSSLSPSS). A compositionally biased stretch (polar residues) spans 132 to 153 (HNTTTGHETGLSSVTPPQSYWT). Residues 207 to 221 (GKEVTKRNKRSRTEA) show a composition bias toward basic and acidic residues. Positions 222–240 (QEASNSPCASSTADSQTNP) are enriched in polar residues.

This sequence belongs to the POU transcription factor family. Class-3 subfamily.

The protein resides in the nucleus. Its function is as follows. Transcription factor; part of the fragmented gene cluster that mediates the biosynthesis of fusarochromene, a tryptophan-derived metabolite closely related to a group of mycotoxins including fusarochromanone. The polypeptide is Transcription factor fscB (Fusarium equiseti (Fusarium scirpi)).